The sequence spans 429 residues: Gamma-glutamyl phosphate reductase (429 aa).

This sequence belongs to the gamma-glutamyl phosphate reductase family.

Its subcellular location is the cytoplasm. It catalyses the reaction L-glutamate 5-semialdehyde + phosphate + NADP(+) = L-glutamyl 5-phosphate + NADPH + H(+). It functions in the pathway amino-acid biosynthesis; L-proline biosynthesis; L-glutamate 5-semialdehyde from L-glutamate: step 2/2. In terms of biological role, catalyzes the NADPH-dependent reduction of L-glutamate 5-phosphate into L-glutamate 5-semialdehyde and phosphate. The product spontaneously undergoes cyclization to form 1-pyrroline-5-carboxylate. The protein is Gamma-glutamyl phosphate reductase of Rhizorhabdus wittichii (strain DSM 6014 / CCUG 31198 / JCM 15750 / NBRC 105917 / EY 4224 / RW1) (Sphingomonas wittichii).